A 171-amino-acid chain; its full sequence is Non-specific lipid transfer protein GPI-anchored 19 (171 aa).

An N-terminal signal peptide occupies residues 1 to 18; that stretch reads MILAILALVIATFLYGGA. 4 cysteine pairs are disulfide-bonded: Cys-25/Cys-66, Cys-35/Cys-50, Cys-51/Cys-93, and Cys-64/Cys-103. N-linked (GlcNAc...) asparagine glycosylation is found at Asn-72 and Asn-82. Positions 113–149 are disordered; sequence LPANTPVGSPRSAPSPSGTTSPANTPSGSKKFPLSNE. Over residues 118–141 the composition is skewed to low complexity; sequence PVGSPRSAPSPSGTTSPANTPSGS. Ser-147 carries the GPI-anchor amidated serine lipid modification. The N-linked (GlcNAc...) asparagine glycan is linked to Asn-148. The propeptide at 148 to 171 is removed in mature form; sequence NESSSKSNVIILSFVSIALVLAII.

The protein belongs to the plant LTP family.

The protein resides in the cell membrane. Its function is as follows. Probable lipid transfer protein. The sequence is that of Non-specific lipid transfer protein GPI-anchored 19 from Arabidopsis thaliana (Mouse-ear cress).